Consider the following 596-residue polypeptide: Leucine-rich repeat and IQ domain-containing protein 4 (596 aa).

22 LRR repeats span residues 22 to 44 (LPRLHRFDIIDTFKTLTKELLRQ), 59 to 83 (LTDRTFFIDGSNQGLKTIPSEILAL), 84 to 106 (KELEEVHLENNQIAEIPQGIQQL), 108 to 129 (NTKVLYLHNNSLQDLCPELGAL), 130 to 152 (SSLESLDLSGNPLVISSLHVVSR), 153 to 176 (LRTLRELRLYRTGLTEIPTGICKS), 177 to 200 (LHHLELFGLSENFLESLPEEIVNQ), 202 to 223 (KLREIYLKQNHFEVFPCDLCVL), 224 to 246 (YNLEVIDLDENKLKSIPGDIGHL), 248 to 269 (RLQKFYVASNHLMSLPESLSQC), 270 to 293 (SKLSVLDLTHNSIHSLPSSLELLT), 295 to 315 (LTEVGLSGNRLEKVPRLLCSW), 317 to 337 (SLHLLYLRNTSLHGLRDSFKR), 338 to 361 (LINLRFLDLSQNHIEHFPVQICAL), 362 to 384 (KNLEILALDDNKVRQLPPSISLL), 385 to 407 (SNLKILGLTGNDLLSFPEEIFSL), 410 to 433 (LEKLYIGQDQGSKLSSLPENIKRL), 434 to 457 (MNLKELYIENNRLEQLPASLGLMP), 459 to 479 (LEVLDCRHNLLKQLPDAICRT), 480 to 502 (RNLRELLLEDNLLCCLPENLDHL), 504 to 525 (NLKVLTLMNNPMVDPPIYVCNQ), and 527 to 549 (NEAIWKHLKENRIRKMMATTIQA). One can recognise an IQ domain in the interval 540–569 (RKMMATTIQAWWRGIMVRKGYGSYEELLKA). The segment covering 569–587 (ARKKGKSPPKDKKGKKAAK) has biased composition (basic residues). The disordered stretch occupies residues 569 to 596 (ARKKGKSPPKDKKGKKAAKGKPEKGNKK).

The protein is Leucine-rich repeat and IQ domain-containing protein 4 (Lrriq4) of Mus musculus (Mouse).